A 272-amino-acid polypeptide reads, in one-letter code: MQDLKQTIETAFENRGELSPASAPAAVREAVEQALAMLDRGEARVAEKRDGDWVVNEWLKKAVLLSFRLNDNEIIRGGATNFFDKVPLKFADTNSEQMRASGVRVVPPAMARRGAYIGPGAVLMPSYVNIGAYVDEGTMVDTWATVGSCAQIGKNVHLSGGVGIGGVLEPLQAAPTIIEDNCFIGARSEVVEGVIVEEGAVISMGVYIGQSTKIYNRETGEVTYGRVPKGAVVVPGSLPAKDGSHSLYCAVIIKQVDAQTRSKVGINELLRP.

Substrate is bound by residues Arg-104 and Asp-141.

Belongs to the transferase hexapeptide repeat family. In terms of assembly, homotrimer.

The protein localises to the cytoplasm. It carries out the reaction (S)-2,3,4,5-tetrahydrodipicolinate + succinyl-CoA + H2O = (S)-2-succinylamino-6-oxoheptanedioate + CoA. Its pathway is amino-acid biosynthesis; L-lysine biosynthesis via DAP pathway; LL-2,6-diaminopimelate from (S)-tetrahydrodipicolinate (succinylase route): step 1/3. This is 2,3,4,5-tetrahydropyridine-2,6-dicarboxylate N-succinyltransferase from Alkalilimnicola ehrlichii (strain ATCC BAA-1101 / DSM 17681 / MLHE-1).